Reading from the N-terminus, the 122-residue chain is Small ribosomal subunit protein uS13 (122 aa).

Residues 93 to 122 (RLSLPVRGQRTKTNSRTRKGKRKTVAGKKK) form a disordered region. The segment covering 101–122 (QRTKTNSRTRKGKRKTVAGKKK) has biased composition (basic residues).

This sequence belongs to the universal ribosomal protein uS13 family. Part of the 30S ribosomal subunit. Forms a loose heterodimer with protein S19. Forms two bridges to the 50S subunit in the 70S ribosome.

Its function is as follows. Located at the top of the head of the 30S subunit, it contacts several helices of the 16S rRNA. In the 70S ribosome it contacts the 23S rRNA (bridge B1a) and protein L5 of the 50S subunit (bridge B1b), connecting the 2 subunits; these bridges are implicated in subunit movement. Contacts the tRNAs in the A and P-sites. The protein is Small ribosomal subunit protein uS13 of Chlamydia pneumoniae (Chlamydophila pneumoniae).